The following is a 563-amino-acid chain: Cystathionine gamma-synthase 1, chloroplastic (563 aa).

A chloroplast-targeting transit peptide spans 1-68 (MAVSSFQCPT…SRILRFPPNF (68 aa)). Pyridoxal 5'-phosphate is bound by residues Tyr-226, Arg-228, Gly-256, Met-257, Tyr-281, Ser-376, and Thr-378. N6-(pyridoxal phosphate)lysine is present on Lys-379.

This sequence belongs to the trans-sulfuration enzymes family. Requires pyridoxal 5'-phosphate as cofactor.

It is found in the plastid. It localises to the chloroplast. It carries out the reaction O-phospho-L-homoserine + L-cysteine = L,L-cystathionine + phosphate. The enzyme catalyses O-succinyl-L-homoserine + L-cysteine = L,L-cystathionine + succinate + H(+). It participates in amino-acid biosynthesis; L-methionine biosynthesis via de novo pathway; L-cystathionine from O-succinyl-L-homoserine: step 1/1. With respect to regulation, inhibited by propargylglycine. Functionally, catalyzes the first committed step of methionine (Met) biosynthesis. Catalyzes the formation of L-cystathionine from homoserine esters and L-cysteine, via a gamma-replacement reaction. Substrate preference for cystathionine synthesis is O-phospho-L-homoserine (OPH) &gt; O(4)-succinyl-L-homoserine (OSH) &gt;&gt; O-acetyl-L-homoserine (OAH). Is able, at extremely low rate, to catalyze a gamma-elimination of OPH in the absence of cysteine to produce inorganic phosphate (Pi), 2-oxobutanoate and ammonia. The sequence is that of Cystathionine gamma-synthase 1, chloroplastic from Arabidopsis thaliana (Mouse-ear cress).